A 164-amino-acid polypeptide reads, in one-letter code: Cyanate hydratase (164 aa).

Residues Arg90, Glu93, and Ser116 contribute to the active site.

This sequence belongs to the cyanase family.

It carries out the reaction cyanate + hydrogencarbonate + 3 H(+) = NH4(+) + 2 CO2. In terms of biological role, catalyzes the reaction of cyanate with bicarbonate to produce ammonia and carbon dioxide. The sequence is that of Cyanate hydratase from Vitis vinifera (Grape).